We begin with the raw amino-acid sequence, 884 residues long: Valine--tRNA ligase (884 aa).

Residues 46-56 carry the 'HIGH' region motif; that stretch reads PNVTGKLHLGH. Residues 520–524 carry the 'KMSKS' region motif; that stretch reads KMSKS. Position 523 (K523) interacts with ATP. The stretch at 809–844 forms a coiled coil; the sequence is LADLLNVEEELARLEKELAKWQKELNMVGKKLSNER.

It belongs to the class-I aminoacyl-tRNA synthetase family. ValS type 1 subfamily. Monomer.

It is found in the cytoplasm. It carries out the reaction tRNA(Val) + L-valine + ATP = L-valyl-tRNA(Val) + AMP + diphosphate. Its function is as follows. Catalyzes the attachment of valine to tRNA(Val). As ValRS can inadvertently accommodate and process structurally similar amino acids such as threonine, to avoid such errors, it has a 'posttransfer' editing activity that hydrolyzes mischarged Thr-tRNA(Val) in a tRNA-dependent manner. The protein is Valine--tRNA ligase of Streptococcus agalactiae serotype Ia (strain ATCC 27591 / A909 / CDC SS700).